A 511-amino-acid chain; its full sequence is D-alanine--D-alanyl carrier protein ligase (511 aa).

Residue 152–153 coordinates ATP; sequence TS. Position 199 (aspartate 199) interacts with D-alanine. 294-299 is an ATP binding site; the sequence is NAYGPT. Valine 303 provides a ligand contact to D-alanine. Residues aspartate 385, 397–400, and lysine 499 each bind ATP; that span reads YGGR. Lysine 499 contributes to the D-alanine binding site.

The protein belongs to the ATP-dependent AMP-binding enzyme family. DltA subfamily.

The protein localises to the cytoplasm. The catalysed reaction is holo-[D-alanyl-carrier protein] + D-alanine + ATP = D-alanyl-[D-alanyl-carrier protein] + AMP + diphosphate. Its pathway is cell wall biogenesis; lipoteichoic acid biosynthesis. In terms of biological role, catalyzes the first step in the D-alanylation of lipoteichoic acid (LTA), the activation of D-alanine and its transfer onto the D-alanyl carrier protein (Dcp) DltC. In an ATP-dependent two-step reaction, forms a high energy D-alanyl-AMP intermediate, followed by transfer of the D-alanyl residue as a thiol ester to the phosphopantheinyl prosthetic group of the Dcp. D-alanylation of LTA plays an important role in modulating the properties of the cell wall in Gram-positive bacteria, influencing the net charge of the cell wall. The protein is D-alanine--D-alanyl carrier protein ligase of Streptococcus agalactiae serotype III (strain NEM316).